Reading from the N-terminus, the 548-residue chain is Luciferin 4-monooxygenase (548 aa).

The Microbody targeting signal motif lies at 546–548; that stretch reads AKM.

Belongs to the ATP-dependent AMP-binding enzyme family. Mg(2+) serves as cofactor.

Its subcellular location is the peroxisome. It catalyses the reaction firefly D-luciferin + ATP + O2 = firefly oxyluciferin + hnu + AMP + CO2 + diphosphate. Functionally, produces green light with a wavelength of 544 nm. The protein is Luciferin 4-monooxygenase of Nipponoluciola cruciata (Genji firefly).